Reading from the N-terminus, the 528-residue chain is Intestinal-type alkaline phosphatase (528 aa).

The first 19 residues, 1-19 (MQGPWVLLLLGLRLQLSLG), serve as a signal peptide directing secretion. Asp61 is a Mg(2+) binding site. Residues Asp61 and Ser111 each coordinate Zn(2+). Ser111 serves as the catalytic Phosphoserine intermediate. The cysteines at positions 140 and 202 are disulfide-linked. Asn141 carries an N-linked (GlcNAc...) asparagine glycan. Ser174 is a binding site for Mg(2+). Residue Glu235 participates in Ca(2+) binding. A glycan (N-linked (GlcNAc...) asparagine) is linked at Asn268. Residues Phe288, Glu289, and Asp304 each contribute to the Ca(2+) site. Glu330 is a Mg(2+) binding site. Zn(2+) contacts are provided by Asp335, His339, Asp376, and His377. N-linked (GlcNAc...) asparagine glycosylation is present at Asn429. His451 contacts Zn(2+). A disulfide bridge links Cys486 with Cys493. A lipid anchor (GPI-anchor amidated aspartate) is attached at Asp503. A propeptide spans 504–528 (AAHPVAASLPLLAGTLLLLGASAAP) (removed in mature form).

The protein belongs to the alkaline phosphatase family. Homodimer. Mg(2+) is required as a cofactor. Requires Zn(2+) as cofactor. Ca(2+) serves as cofactor.

It localises to the cell membrane. The catalysed reaction is a phosphate monoester + H2O = an alcohol + phosphate. Functionally, alkaline phosphatase that can hydrolyze various phosphate compounds. The protein is Intestinal-type alkaline phosphatase (ALPI) of Homo sapiens (Human).